The following is a 183-amino-acid chain: Peptide deformylase (183 aa).

The Fe cation site is built by Cys110 and His153. The active site involves Glu154. Residue His157 coordinates Fe cation.

It belongs to the polypeptide deformylase family. It depends on Fe(2+) as a cofactor.

It catalyses the reaction N-terminal N-formyl-L-methionyl-[peptide] + H2O = N-terminal L-methionyl-[peptide] + formate. In terms of biological role, removes the formyl group from the N-terminal Met of newly synthesized proteins. Requires at least a dipeptide for an efficient rate of reaction. N-terminal L-methionine is a prerequisite for activity but the enzyme has broad specificity at other positions. The polypeptide is Peptide deformylase (Listeria welshimeri serovar 6b (strain ATCC 35897 / DSM 20650 / CCUG 15529 / CIP 8149 / NCTC 11857 / SLCC 5334 / V8)).